The primary structure comprises 301 residues: ATP synthase gamma chain (301 aa).

This sequence belongs to the ATPase gamma chain family. In terms of assembly, F-type ATPases have 2 components, CF(1) - the catalytic core - and CF(0) - the membrane proton channel. CF(1) has five subunits: alpha(3), beta(3), gamma(1), delta(1), epsilon(1). CF(0) has three main subunits: a, b and c.

It is found in the cell inner membrane. Produces ATP from ADP in the presence of a proton gradient across the membrane. The gamma chain is believed to be important in regulating ATPase activity and the flow of protons through the CF(0) complex. The sequence is that of ATP synthase gamma chain from Bordetella parapertussis (strain 12822 / ATCC BAA-587 / NCTC 13253).